Reading from the N-terminus, the 368-residue chain is Cobalt-precorrin-5B C(1)-methyltransferase (368 aa).

This sequence belongs to the CbiD family.

The enzyme catalyses Co-precorrin-5B + S-adenosyl-L-methionine = Co-precorrin-6A + S-adenosyl-L-homocysteine. It functions in the pathway cofactor biosynthesis; adenosylcobalamin biosynthesis; cob(II)yrinate a,c-diamide from sirohydrochlorin (anaerobic route): step 6/10. Functionally, catalyzes the methylation of C-1 in cobalt-precorrin-5B to form cobalt-precorrin-6A. The sequence is that of Cobalt-precorrin-5B C(1)-methyltransferase from Synechococcus sp. (strain CC9605).